The chain runs to 183 residues: Probable adenylyl-sulfate kinase (183 aa).

Residue 17-24 (GLPGSGKT) participates in ATP binding. The active-site Phosphoserine intermediate is the serine 91.

This sequence belongs to the APS kinase family.

The catalysed reaction is adenosine 5'-phosphosulfate + ATP = 3'-phosphoadenylyl sulfate + ADP + H(+). The protein operates within sulfur metabolism; hydrogen sulfide biosynthesis; sulfite from sulfate: step 2/3. Its function is as follows. Catalyzes the synthesis of activated sulfate. This Aeropyrum pernix (strain ATCC 700893 / DSM 11879 / JCM 9820 / NBRC 100138 / K1) protein is Probable adenylyl-sulfate kinase (cysC).